A 222-amino-acid chain; its full sequence is Small ribosomal subunit protein uS3 (222 aa).

In terms of domain architecture, KH type-2 spans 39–108; it reads IRRHIKEKLY…TISLDIKEIK (70 aa).

The protein belongs to the universal ribosomal protein uS3 family. As to quaternary structure, part of the 30S ribosomal subunit. Forms a tight complex with proteins S10 and S14.

In terms of biological role, binds the lower part of the 30S subunit head. Binds mRNA in the 70S ribosome, positioning it for translation. This is Small ribosomal subunit protein uS3 from Caldicellulosiruptor saccharolyticus (strain ATCC 43494 / DSM 8903 / Tp8T 6331).